Reading from the N-terminus, the 184-residue chain is UPF0301 protein ABSDF3201 (184 aa).

It belongs to the UPF0301 (AlgH) family.

This chain is UPF0301 protein ABSDF3201, found in Acinetobacter baumannii (strain SDF).